The following is a 416-amino-acid chain: 3-isopropylmalate dehydratase large subunit (416 aa).

Cys-297, Cys-357, and Cys-360 together coordinate [4Fe-4S] cluster.

Belongs to the aconitase/IPM isomerase family. LeuC type 2 subfamily. As to quaternary structure, heterodimer of LeuC and LeuD. [4Fe-4S] cluster serves as cofactor.

It catalyses the reaction (2R,3S)-3-isopropylmalate = (2S)-2-isopropylmalate. The protein operates within amino-acid biosynthesis; L-leucine biosynthesis; L-leucine from 3-methyl-2-oxobutanoate: step 2/4. In terms of biological role, catalyzes the isomerization between 2-isopropylmalate and 3-isopropylmalate, via the formation of 2-isopropylmaleate. This Methanoregula boonei (strain DSM 21154 / JCM 14090 / 6A8) protein is 3-isopropylmalate dehydratase large subunit.